The following is a 552-amino-acid chain: Eukaryotic translation initiation factor 3 subunit D (552 aa).

The RNA gate stretch occupies residues 288 to 302 (DFDLLTVSETANEPP). Residues 526–552 (PDGTFSSDEEDDDDDEEEEEEVEEEES) form a disordered region. Acidic residues predominate over residues 532 to 552 (SDEEDDDDDEEEEEEVEEEES).

It belongs to the eIF-3 subunit D family. Component of the eukaryotic translation initiation factor 3 (eIF-3) complex, which is composed of 13 subunits: eif3a, eif3b, eif3c, eif3d, eif3e, eif3f, eif3g, eif3h, eif3i, eif3j, eif3k, eif3l and eif3m.

It is found in the cytoplasm. Its function is as follows. mRNA cap-binding component of the eukaryotic translation initiation factor 3 (eIF-3) complex, which is involved in protein synthesis of a specialized repertoire of mRNAs and, together with other initiation factors, stimulates binding of mRNA and methionyl-tRNAi to the 40S ribosome. The eIF-3 complex specifically targets and initiates translation of a subset of mRNAs involved in cell proliferation. In the eIF-3 complex, eif3d specifically recognizes and binds the 7-methylguanosine cap of a subset of mRNAs. This Xenopus tropicalis (Western clawed frog) protein is Eukaryotic translation initiation factor 3 subunit D (eif3d).